The sequence spans 318 residues: Taste receptor type 2 member 60 (318 aa).

Residues Met1 to Val7 are Extracellular-facing. Residues Leu8–Cys28 form a helical membrane-spanning segment. Residues Leu29–Ala40 are Cytoplasmic-facing. The helical transmembrane segment at Ala41 to Ser61 threads the bilayer. Topologically, residues Leu62 to Pro88 are extracellular. The helical transmembrane segment at Tyr89–Trp109 threads the bilayer. Topologically, residues Phe110 to Pro128 are cytoplasmic. Residues Val129–Val149 traverse the membrane as a helical segment. Residues Gly150 to Asn183 are Extracellular-facing. Asn179 carries an N-linked (GlcNAc...) asparagine glycan. Residues Ser184–Met204 form a helical membrane-spanning segment. The Cytoplasmic segment spans residues Pro205–Phe234. The helical transmembrane segment at Arg235–Leu255 threads the bilayer. Residues Phe256–Val264 lie on the Extracellular side of the membrane. A helical transmembrane segment spans residues Phe265–Ile285. The Cytoplasmic segment spans residues Tyr286–Pro318.

The protein belongs to the G-protein coupled receptor T2R family.

It localises to the membrane. Its function is as follows. Receptor that may play a role in the perception of bitterness and is gustducin-linked. May play a role in sensing the chemical composition of the gastrointestinal content. The activity of this receptor may stimulate alpha gustducin, mediate PLC-beta-2 activation and lead to the gating of TRPM5. The protein is Taste receptor type 2 member 60 (TAS2R60) of Pongo pygmaeus (Bornean orangutan).